Reading from the N-terminus, the 783-residue chain is ATP-dependent 6-phosphofructokinase (783 aa).

Pro residues predominate over residues 1 to 10; it reads MAPPQAPVQP. The segment at 1 to 20 is disordered; that stretch reads MAPPQAPVQPPKRRRIGVLT. The interval 1-389 is N-terminal catalytic PFK domain 1; it reads MAPPQAPVQP…YHFSYINTST (389 aa). ATP-binding positions include glycine 23, 86–87, and 116–119; these read RC and GDGS. Aspartate 117 provides a ligand contact to Mg(2+). Residues 162 to 164, arginine 199, 206 to 208, glutamate 263, arginine 291, and 297 to 300 contribute to the substrate site; these read SID, MGR, and HTQR. The Proton acceptor role is filled by aspartate 164. Residues 390 to 403 are interdomain linker; sequence PDHPKLLLPENKRM. The segment at 404 to 783 is C-terminal regulatory PFK domain 2; it reads RIGIIHVGAP…NATWSCYENA (380 aa). Beta-D-fructose 2,6-bisphosphate-binding positions include arginine 480, 537-541, arginine 575, 582-584, glutamate 642, arginine 668, 674-677, and arginine 749; these read TISNN, QGG, and HFQQ.

Belongs to the phosphofructokinase type A (PFKA) family. ATP-dependent PFK group I subfamily. Eukaryotic two domain clade 'E' sub-subfamily. As to quaternary structure, homotetramer. Mg(2+) is required as a cofactor.

The protein resides in the cytoplasm. It catalyses the reaction beta-D-fructose 6-phosphate + ATP = beta-D-fructose 1,6-bisphosphate + ADP + H(+). It participates in carbohydrate degradation; glycolysis; D-glyceraldehyde 3-phosphate and glycerone phosphate from D-glucose: step 3/4. With respect to regulation, allosterically activated by ADP, AMP, or fructose 2,6-bisphosphate, and allosterically inhibited by ATP or citrate. Catalyzes the phosphorylation of D-fructose 6-phosphate to fructose 1,6-bisphosphate by ATP, the first committing step of glycolysis. The sequence is that of ATP-dependent 6-phosphofructokinase (pfkA) from Aspergillus niger.